Reading from the N-terminus, the 466-residue chain is Neuropeptide Y receptor type 5 (466 aa).

The Extracellular portion of the chain corresponds to 1 to 63 (MEVKLEEHFN…YRGSVDDLQY (63 aa)). N-linked (GlcNAc...) asparagine glycosylation is found at N10, N17, N38, and N39. Residues 64–84 (FLIGLYTFVSLLGFMGNLLIL) traverse the membrane as a helical segment. Residues 85–98 (MAVMKKRNQKTTVN) are Cytoplasmic-facing. A helical membrane pass occupies residues 99–119 (FLIGNLAFSDILVVLFCSPFT). Over 120–138 (LTSVLLDQWMFGKAMCHIM) the chain is Extracellular. A disulfide bond links C135 and C219. A helical membrane pass occupies residues 139 to 159 (PFLQCVSVLVSTLILISIAIV). The Cytoplasmic portion of the chain corresponds to 160 to 177 (RYHMIKHPISNNLTANHG). A helical transmembrane segment spans residues 178 to 198 (YFLIATVWTLGFAICSPLPVF). Topologically, residues 199 to 229 (HSLVELKETFGSALLSSKYLCVESWPSDSYR) are extracellular. Residues 230-250 (IAFTISLLLVQYILPLVCLTV) traverse the membrane as a helical segment. The Cytoplasmic portion of the chain corresponds to 251-389 (SHTSVCRSIS…KKRSRSVFYR (139 aa)). Residues 323–346 (GPSQEKHLTVPENPGSVRSQLSPS) form a disordered region. A helical transmembrane segment spans residues 390 to 410 (LTILILVFAVSWMPLHVFHVV). Topologically, residues 411–427 (TDFNDNLISNRHFKLVY) are extracellular. A helical transmembrane segment spans residues 428–448 (CICHLLGMMSCCLNPILYGFL). The Cytoplasmic segment spans residues 449–466 (NNGIKADLRALIHCLHMS). C462 carries the S-palmitoyl cysteine lipid modification.

The protein belongs to the G-protein coupled receptor 1 family.

It localises to the cell membrane. Functionally, receptor for neuropeptide Y and peptide YY. The activity of this receptor is mediated by G proteins that inhibit adenylate cyclase activity. Seems to be associated with food intake. Could be involved in feeding disorders. The sequence is that of Neuropeptide Y receptor type 5 (Npy5r) from Mus musculus (Mouse).